The following is a 392-amino-acid chain: Succinate--CoA ligase [ADP-forming] subunit beta (392 aa).

Residues 9–247 (KEILRVCGVP…LYEEDPKEIE (239 aa)) enclose the ATP-grasp domain. ATP is bound by residues Lys49, 56-58 (GRG), Glu102, Gln105, and Glu110. Mg(2+)-binding residues include Asn202 and Asp216. Substrate contacts are provided by residues Asn267 and 324–326 (GIM).

This sequence belongs to the succinate/malate CoA ligase beta subunit family. As to quaternary structure, heterotetramer of two alpha and two beta subunits. Mg(2+) serves as cofactor.

The enzyme catalyses succinate + ATP + CoA = succinyl-CoA + ADP + phosphate. The catalysed reaction is GTP + succinate + CoA = succinyl-CoA + GDP + phosphate. The protein operates within carbohydrate metabolism; tricarboxylic acid cycle; succinate from succinyl-CoA (ligase route): step 1/1. In terms of biological role, succinyl-CoA synthetase functions in the citric acid cycle (TCA), coupling the hydrolysis of succinyl-CoA to the synthesis of either ATP or GTP and thus represents the only step of substrate-level phosphorylation in the TCA. The beta subunit provides nucleotide specificity of the enzyme and binds the substrate succinate, while the binding sites for coenzyme A and phosphate are found in the alpha subunit. In Neorickettsia sennetsu (strain ATCC VR-367 / Miyayama) (Ehrlichia sennetsu), this protein is Succinate--CoA ligase [ADP-forming] subunit beta.